The sequence spans 464 residues: Glutamate--tRNA ligase (464 aa).

Positions 10–20 (PSPTGYLHIGG) match the 'HIGH' region motif. Residues 113-130 (QEAKKEKPRYDGRWRPEA) show a composition bias toward basic and acidic residues. Residues 113–142 (QEAKKEKPRYDGRWRPEAGKALPVPPTDVP) are disordered. The short motif at 242-246 (KLSKR) is the 'KMSKS' region element. Lys245 provides a ligand contact to ATP.

It belongs to the class-I aminoacyl-tRNA synthetase family. Glutamate--tRNA ligase type 1 subfamily. As to quaternary structure, monomer.

Its subcellular location is the cytoplasm. It catalyses the reaction tRNA(Glu) + L-glutamate + ATP = L-glutamyl-tRNA(Glu) + AMP + diphosphate. Catalyzes the attachment of glutamate to tRNA(Glu) in a two-step reaction: glutamate is first activated by ATP to form Glu-AMP and then transferred to the acceptor end of tRNA(Glu). This chain is Glutamate--tRNA ligase, found in Dechloromonas aromatica (strain RCB).